We begin with the raw amino-acid sequence, 388 residues long: Succinate--CoA ligase [ADP-forming] subunit beta (388 aa).

The region spanning 9 to 244 (KEILRKFGVA…PDEEDPKETQ (236 aa)) is the ATP-grasp domain. ATP-binding positions include K46, 53–55 (GRG), E99, C102, and E107. N199 and D213 together coordinate Mg(2+). Substrate is bound by residues N264 and 321–323 (GIM).

This sequence belongs to the succinate/malate CoA ligase beta subunit family. In terms of assembly, heterotetramer of two alpha and two beta subunits. Mg(2+) is required as a cofactor.

It carries out the reaction succinate + ATP + CoA = succinyl-CoA + ADP + phosphate. It catalyses the reaction GTP + succinate + CoA = succinyl-CoA + GDP + phosphate. The protein operates within carbohydrate metabolism; tricarboxylic acid cycle; succinate from succinyl-CoA (ligase route): step 1/1. Its function is as follows. Succinyl-CoA synthetase functions in the citric acid cycle (TCA), coupling the hydrolysis of succinyl-CoA to the synthesis of either ATP or GTP and thus represents the only step of substrate-level phosphorylation in the TCA. The beta subunit provides nucleotide specificity of the enzyme and binds the substrate succinate, while the binding sites for coenzyme A and phosphate are found in the alpha subunit. In Anaeromyxobacter dehalogenans (strain 2CP-C), this protein is Succinate--CoA ligase [ADP-forming] subunit beta.